The chain runs to 339 residues: Aspartate carbamoyltransferase catalytic subunit (339 aa).

2 residues coordinate carbamoyl phosphate: Arg69 and Thr70. Lys97 serves as a coordination point for L-aspartate. Arg119, His149, and Gln152 together coordinate carbamoyl phosphate. Residues Arg182 and Arg237 each contribute to the L-aspartate site. Positions 278 and 279 each coordinate carbamoyl phosphate.

The protein belongs to the aspartate/ornithine carbamoyltransferase superfamily. ATCase family. As to quaternary structure, heterododecamer (2C3:3R2) of six catalytic PyrB chains organized as two trimers (C3), and six regulatory PyrI chains organized as three dimers (R2).

The enzyme catalyses carbamoyl phosphate + L-aspartate = N-carbamoyl-L-aspartate + phosphate + H(+). The protein operates within pyrimidine metabolism; UMP biosynthesis via de novo pathway; (S)-dihydroorotate from bicarbonate: step 2/3. Its function is as follows. Catalyzes the condensation of carbamoyl phosphate and aspartate to form carbamoyl aspartate and inorganic phosphate, the committed step in the de novo pyrimidine nucleotide biosynthesis pathway. This chain is Aspartate carbamoyltransferase catalytic subunit, found in Hydrogenovibrio crunogenus (strain DSM 25203 / XCL-2) (Thiomicrospira crunogena).